The primary structure comprises 351 residues: MTDSLPLLLRAARGESVNRPPVWMMRQAGRYMKVYRELRDNHPSFRERSENPDLSYEISMQPFREFKPDGVILFSDILTPLPGMGIDFDIVESKGPLINDPIRTLEQVKTLRPLEPQVSLPFVGEVLGRLRESVKNEAAVLGFVGAPWTLAAYVVEGKSSKNYSVIKAMAFQQPDLLHKLLNHFAESIANYLKYQIESGAQVVQMFDSWAGQLSPIDYDNYAAPYQKKVVDLVKQSHPDTPMILYISGSAGVIERMAKTGVDIVSLDWTVDMAEGCARLPNNIGIQGNVDPGILFGTPKMIQERIIDTVKKAKGRKHILNLGHGILPGTPEENAKVFFETGKNINNLISNI.

Residues 26 to 30, F45, D76, Y153, S208, and H323 contribute to the substrate site; that span reads RQAGR.

It belongs to the uroporphyrinogen decarboxylase family. In terms of assembly, homodimer.

The protein localises to the cytoplasm. The enzyme catalyses uroporphyrinogen III + 4 H(+) = coproporphyrinogen III + 4 CO2. It functions in the pathway porphyrin-containing compound metabolism; protoporphyrin-IX biosynthesis; coproporphyrinogen-III from 5-aminolevulinate: step 4/4. In terms of biological role, catalyzes the decarboxylation of four acetate groups of uroporphyrinogen-III to yield coproporphyrinogen-III. In Prochlorococcus marinus (strain SARG / CCMP1375 / SS120), this protein is Uroporphyrinogen decarboxylase.